The primary structure comprises 354 residues: Probable L-ascorbate-6-phosphate lactonase UlaG (354 aa).

Belongs to the UlaG family. Requires a divalent metal cation as cofactor.

The protein localises to the cytoplasm. It catalyses the reaction L-ascorbate 6-phosphate + H2O = 3-dehydro-L-gulonate 6-phosphate. It participates in cofactor degradation; L-ascorbate degradation; D-xylulose 5-phosphate from L-ascorbate: step 1/4. Its function is as follows. Probably catalyzes the hydrolysis of L-ascorbate-6-P into 3-keto-L-gulonate-6-P. Is essential for L-ascorbate utilization under anaerobic conditions. This is Probable L-ascorbate-6-phosphate lactonase UlaG from Escherichia coli (strain SMS-3-5 / SECEC).